The following is a 254-amino-acid chain: Isoprenyl transferase (254 aa).

Asp24 is a catalytic residue. Residue Asp24 participates in Mg(2+) binding. Substrate contacts are provided by residues 25 to 28 (GNGR), Trp29, Arg37, His41, and 69 to 71 (SSE). Asn72 functions as the Proton acceptor in the catalytic mechanism. Residues Trp73, Arg75, Arg192, and 198–200 (RIS) contribute to the substrate site. Residue Glu211 participates in Mg(2+) binding.

The protein belongs to the UPP synthase family. Homodimer. Mg(2+) is required as a cofactor.

In terms of biological role, catalyzes the condensation of isopentenyl diphosphate (IPP) with allylic pyrophosphates generating different type of terpenoids. The polypeptide is Isoprenyl transferase (Bordetella parapertussis (strain 12822 / ATCC BAA-587 / NCTC 13253)).